A 302-amino-acid chain; its full sequence is tRNA pseudouridine synthase B (302 aa).

Asp-45 acts as the Nucleophile in catalysis.

This sequence belongs to the pseudouridine synthase TruB family. Type 1 subfamily.

It carries out the reaction uridine(55) in tRNA = pseudouridine(55) in tRNA. Responsible for synthesis of pseudouridine from uracil-55 in the psi GC loop of transfer RNAs. This chain is tRNA pseudouridine synthase B, found in Francisella tularensis subsp. tularensis (strain WY96-3418).